A 691-amino-acid polypeptide reads, in one-letter code: DNA topoisomerase 1 (691 aa).

One can recognise a Toprim domain in the interval 3 to 114 (DYLVIVESPA…DCRVVFNEIT (112 aa)). Glu9 and Asp82 together coordinate Mg(2+). Positions 129–558 (NMDLVDAQQA…NFYTDFEKRV (430 aa)) constitute a Topo IA-type catalytic domain. An interaction with DNA region spans residues 163–168 (SAGRVQ). Tyr298 (O-(5'-phospho-DNA)-tyrosine intermediate) is an active-site residue. 3 consecutive C4-type zinc fingers follow at residues 579-605 (CELC…FPDC), 619-647 (CPSC…YPDC), and 660-683 (CPKC…CVEC).

Belongs to the type IA topoisomerase family. Monomer. Interacts with the RNA polymerase core. It depends on Mg(2+) as a cofactor.

It catalyses the reaction ATP-independent breakage of single-stranded DNA, followed by passage and rejoining.. Releases the supercoiling and torsional tension of DNA, which is introduced during the DNA replication and transcription, by transiently cleaving and rejoining one strand of the DNA duplex. Introduces a single-strand break via transesterification at a target site in duplex DNA. The scissile phosphodiester is attacked by the catalytic tyrosine of the enzyme, resulting in the formation of a DNA-(5'-phosphotyrosyl)-enzyme intermediate and the expulsion of a 3'-OH DNA strand. The free DNA strand then undergoes passage around the unbroken strand, thus removing DNA supercoils. Finally, in the religation step, the DNA 3'-OH attacks the covalent intermediate to expel the active-site tyrosine and restore the DNA phosphodiester backbone. This chain is DNA topoisomerase 1, found in Bacillus subtilis (strain 168).